The sequence spans 393 residues: NAD(P)H-quinone oxidoreductase subunit H, chloroplastic (393 aa).

The protein belongs to the complex I 49 kDa subunit family. NDH is composed of at least 16 different subunits, 5 of which are encoded in the nucleus.

It is found in the plastid. It localises to the chloroplast thylakoid membrane. The catalysed reaction is a plastoquinone + NADH + (n+1) H(+)(in) = a plastoquinol + NAD(+) + n H(+)(out). It carries out the reaction a plastoquinone + NADPH + (n+1) H(+)(in) = a plastoquinol + NADP(+) + n H(+)(out). NDH shuttles electrons from NAD(P)H:plastoquinone, via FMN and iron-sulfur (Fe-S) centers, to quinones in the photosynthetic chain and possibly in a chloroplast respiratory chain. The immediate electron acceptor for the enzyme in this species is believed to be plastoquinone. Couples the redox reaction to proton translocation, and thus conserves the redox energy in a proton gradient. This is NAD(P)H-quinone oxidoreductase subunit H, chloroplastic from Gossypium hirsutum (Upland cotton).